A 507-amino-acid polypeptide reads, in one-letter code: Probable DNA ligase (507 aa).

Residue E209 coordinates ATP. The N6-AMP-lysine intermediate role is filled by K211. ATP is bound by residues R216, R231, E260, F300, R372, and K378.

It belongs to the ATP-dependent DNA ligase family. The cofactor is Mg(2+).

The enzyme catalyses ATP + (deoxyribonucleotide)n-3'-hydroxyl + 5'-phospho-(deoxyribonucleotide)m = (deoxyribonucleotide)n+m + AMP + diphosphate.. In terms of biological role, DNA ligase that seals nicks in double-stranded DNA during DNA replication, DNA recombination and DNA repair. This is Probable DNA ligase from Mycobacterium bovis (strain ATCC BAA-935 / AF2122/97).